The primary structure comprises 637 residues: Chaperone protein HtpG (637 aa).

Residues 1–345 (MSQQETHGFQ…SNDLPLNVSR (345 aa)) are a; substrate-binding. Residues 346–562 (EILQDNQVTT…EGEMSTQMIK (217 aa)) form a b region. The c stretch occupies residues 563–637 (LMQAAGQAVP…MNQMLLANAK (75 aa)).

This sequence belongs to the heat shock protein 90 family. As to quaternary structure, homodimer.

It localises to the cytoplasm. In terms of biological role, molecular chaperone. Has ATPase activity. The chain is Chaperone protein HtpG from Shewanella denitrificans (strain OS217 / ATCC BAA-1090 / DSM 15013).